We begin with the raw amino-acid sequence, 301 residues long: Ras-related GTP-binding protein A (301 aa).

GTP-binding positions include 9-16 (GRSESGKT), 57-61 (DCGGQ), and 122-125 (HKMD).

Belongs to the GTR/RAG GTP-binding protein family.

The protein resides in the cytoplasm. It localises to the nucleus. The protein localises to the lysosome. Guanine nucleotide-binding protein that plays a crucial role in the cellular response to amino acid availability through regulation of the TOR signaling cascade. This chain is Ras-related GTP-binding protein A (ragA), found in Dictyostelium discoideum (Social amoeba).